Consider the following 420-residue polypeptide: Ammonium transporter Amt2 (420 aa).

Transmembrane regions (helical) follow at residues 34–54 (VFFL…FAML), 71–91 (NMVD…ILCS), 120–140 (SWFF…GGVA), 149–169 (VLIS…LGPW), 180–200 (AGSL…IAAL), 220–240 (IPMA…FNVG), 250–270 (GLVC…ALIA), 273–293 (NDVL…CSGT), 295–315 (VVSP…VPIV), 339–359 (VIGA…AGGV), and 365–385 (IIGA…LAKI).

It belongs to the ammonia transporter channel (TC 1.A.11.2) family. In terms of assembly, homotrimer. Interacts and forms a complex with GlnK2.

It localises to the cell membrane. Its function is as follows. Involved in the uptake of ammonium/ammonia (NH(4)(+)/NH(3)). Transport is electrogenic. This Methanocaldococcus jannaschii (strain ATCC 43067 / DSM 2661 / JAL-1 / JCM 10045 / NBRC 100440) (Methanococcus jannaschii) protein is Ammonium transporter Amt2.